A 246-amino-acid chain; its full sequence is MSKLKKTKHPFPCFSIWQQFKRKLYRTFALFLVLFLSSVVLFRFVPVPFSAYMLQQKIGYLFEGNLSSTIHYQWVPLEQISQSMQLAVIASEDQRFATHYGFDWDAIQSALQHNQRGKRIRGGSTISQQTAKNLYLWHGQSWLRKAIEMPTTLVLETLWSKKRILEVYLNIAEFGPNIFGVEAASQHYFRKPAKQLSNAEAALLAAVLPNPIIFKVNKPSAYVKKRQQHIQRQMGLLGKQHLSQLD.

Residues 28-48 (FALFLVLFLSSVVLFRFVPVP) form a helical membrane-spanning segment.

Belongs to the glycosyltransferase 51 family.

Its subcellular location is the cell inner membrane. It catalyses the reaction [GlcNAc-(1-&gt;4)-Mur2Ac(oyl-L-Ala-gamma-D-Glu-L-Lys-D-Ala-D-Ala)](n)-di-trans,octa-cis-undecaprenyl diphosphate + beta-D-GlcNAc-(1-&gt;4)-Mur2Ac(oyl-L-Ala-gamma-D-Glu-L-Lys-D-Ala-D-Ala)-di-trans,octa-cis-undecaprenyl diphosphate = [GlcNAc-(1-&gt;4)-Mur2Ac(oyl-L-Ala-gamma-D-Glu-L-Lys-D-Ala-D-Ala)](n+1)-di-trans,octa-cis-undecaprenyl diphosphate + di-trans,octa-cis-undecaprenyl diphosphate + H(+). The protein operates within cell wall biogenesis; peptidoglycan biosynthesis. In terms of biological role, peptidoglycan polymerase that catalyzes glycan chain elongation from lipid-linked precursors. The chain is Biosynthetic peptidoglycan transglycosylase from Pasteurella multocida (strain Pm70).